The following is a 157-amino-acid chain: Large ribosomal subunit protein uL15 (157 aa).

Positions methionine 1–proline 56 are disordered. Residues isoleucine 23–methionine 35 show a composition bias toward gly residues.

Belongs to the universal ribosomal protein uL15 family. In terms of assembly, part of the 50S ribosomal subunit.

In terms of biological role, binds to the 23S rRNA. The polypeptide is Large ribosomal subunit protein uL15 (Synechococcus sp. (strain JA-3-3Ab) (Cyanobacteria bacterium Yellowstone A-Prime)).